An 83-amino-acid polypeptide reads, in one-letter code: Beta-defensin 119 (83 aa).

Positions 1–20 (MKFLFLFLAILLAMEPVVSG) are cleaved as a signal peptide. 3 disulfides stabilise this stretch: Cys-27–Cys-54, Cys-34–Cys-48, and Cys-38–Cys-55.

This sequence belongs to the beta-defensin family.

It localises to the secreted. In terms of biological role, has antibacterial activity. This chain is Beta-defensin 119 (DEFB119), found in Bos taurus (Bovine).